We begin with the raw amino-acid sequence, 483 residues long: MLTLDTLNVMLAVSEEGMVEEMILALLASPQLVIFFEKFPRLKNAVTADLPRWREALRSRLKDARVPQKLTEEVMCYQQSQLLSTPQFIVQLPQILALLHRLHSPYAAQAKQLVESNSTFTPSLHTLFLQRWRLSLVVQATTLNQQLLEEEREQLLSDVQERMTLSGQLEPTLAENDNAAGRLWDMSAGQLKRGDYQLIVKYGEFLAAQPELKQLAEQLGRSREAKSVPKKDAPMETFRTLVREPATVPEQVDGIQQSDDILRLLPPELATLGITELEYEFYRRLVEKQLLTYRLHGEAWREKVTERPVVHQDVDKQPRGPFIVCVDTSGSMGGFNEQCAKAFCLALMRVALADNRRCFIMLFSTEVVRYELSGPEGIEQAIRFLSQRFRGGTDIASCFRAIIERMQRRKWFDADAVVISDFIAQRLPDDVVSKVGELQRLHQHRFHAVAMSAHGKPGIMRIFDHIWRFDTGMRSRLLRRWRR.

This sequence belongs to the ViaA family. Homodimer. Interacts with RavA.

It localises to the cytoplasm. Component of the RavA-ViaA chaperone complex, which may act on the membrane to optimize the function of some of the respiratory chains. ViaA stimulates the ATPase activity of RavA. The polypeptide is Regulatory protein ViaA (Salmonella arizonae (strain ATCC BAA-731 / CDC346-86 / RSK2980)).